A 656-amino-acid polypeptide reads, in one-letter code: Protein arginine N-methyltransferase 7 (656 aa).

SAM-dependent MTase PRMT-type domains are found at residues Glu-12–Trp-338 and Gly-343–Asn-656.

This sequence belongs to the class I-like SAM-binding methyltransferase superfamily. Protein arginine N-methyltransferase family. PRMT7 subfamily.

Arginine methyltransferase that can both catalyze the formation of omega-N monomethylarginine (MMA) and symmetrical dimethylarginine (sDMA). The chain is Protein arginine N-methyltransferase 7 (prmt-7) from Caenorhabditis briggsae.